We begin with the raw amino-acid sequence, 430 residues long: Enolase (430 aa).

Residue Gln-165 coordinates (2R)-2-phosphoglycerate. Catalysis depends on Glu-207, which acts as the Proton donor. Mg(2+)-binding residues include Asp-244, Glu-287, and Asp-314. (2R)-2-phosphoglycerate is bound by residues Lys-339, Arg-368, Ser-369, and Lys-390. Lys-339 (proton acceptor) is an active-site residue.

This sequence belongs to the enolase family. As to quaternary structure, component of the RNA degradosome, a multiprotein complex involved in RNA processing and mRNA degradation. It depends on Mg(2+) as a cofactor.

The protein resides in the cytoplasm. The protein localises to the secreted. Its subcellular location is the cell surface. It catalyses the reaction (2R)-2-phosphoglycerate = phosphoenolpyruvate + H2O. It participates in carbohydrate degradation; glycolysis; pyruvate from D-glyceraldehyde 3-phosphate: step 4/5. Its function is as follows. Catalyzes the reversible conversion of 2-phosphoglycerate (2-PG) into phosphoenolpyruvate (PEP). It is essential for the degradation of carbohydrates via glycolysis. The sequence is that of Enolase from Stenotrophomonas maltophilia (strain R551-3).